Here is a 190-residue protein sequence, read N- to C-terminus: Prostaglandin-H2 D-isomerase (190 aa).

An N-terminal signal peptide occupies residues 1 to 22 (MATHHTLWMGLALLGVLGDLQA). Asparagine 51 carries an N-linked (GlcNAc...) asparagine glycan. Residue cysteine 65 is the Nucleophile of the active site. The N-linked (GlcNAc...) asparagine glycan is linked to asparagine 78. Cysteine 89 and cysteine 186 are joined by a disulfide.

Belongs to the calycin superfamily. Lipocalin family. Monomer.

The protein resides in the rough endoplasmic reticulum. Its subcellular location is the nucleus membrane. The protein localises to the golgi apparatus. It localises to the cytoplasm. It is found in the perinuclear region. The protein resides in the secreted. The catalysed reaction is prostaglandin H2 = prostaglandin D2. In terms of biological role, catalyzes the conversion of PGH2 to PGD2, a prostaglandin involved in smooth muscle contraction/relaxation and a potent inhibitor of platelet aggregation. Involved in a variety of CNS functions, such as sedation, NREM sleep and PGE2-induced allodynia, and may have an anti-apoptotic role in oligodendrocytes. Binds small non-substrate lipophilic molecules, including biliverdin, bilirubin, retinal, retinoic acid and thyroid hormone, and may act as a scavenger for harmful hydrophobic molecules and as a secretory retinoid and thyroid hormone transporter. Possibly involved in development and maintenance of the blood-brain, blood-retina, blood-aqueous humor and blood-testis barrier. It is likely to play important roles in both maturation and maintenance of the central nervous system and male reproductive system. Involved in PLA2G3-dependent maturation of mast cells. PLA2G3 is secreted by immature mast cells and acts on nearby fibroblasts upstream to PTDGS to synthesize PGD2, which in turn promotes mast cell maturation and degranulation via PTGDR. The chain is Prostaglandin-H2 D-isomerase (PTGDS) from Gorilla gorilla gorilla (Western lowland gorilla).